The chain runs to 174 residues: Small ribosomal subunit protein uS5 (174 aa).

The S5 DRBM domain maps to 16–79 (FSELIVSVRR…NAAKKNMIRV (64 aa)).

Belongs to the universal ribosomal protein uS5 family. In terms of assembly, part of the 30S ribosomal subunit. Contacts proteins S4 and S8.

Its function is as follows. With S4 and S12 plays an important role in translational accuracy. Located at the back of the 30S subunit body where it stabilizes the conformation of the head with respect to the body. In Ehrlichia canis (strain Jake), this protein is Small ribosomal subunit protein uS5.